Consider the following 461-residue polypeptide: V-type ATP synthase beta chain (461 aa).

Belongs to the ATPase alpha/beta chains family.

Functionally, produces ATP from ADP in the presence of a proton gradient across the membrane. The V-type beta chain is a regulatory subunit. In Clostridium botulinum (strain Langeland / NCTC 10281 / Type F), this protein is V-type ATP synthase beta chain.